The following is a 130-amino-acid chain: Protachykinin-1 (130 aa).

An N-terminal signal peptide occupies residues 1–19; it reads MKILVAVAVFFLVSTQLSA. Residues 20 to 56 constitute a propeptide that is removed on maturation; the sequence is EEIGANDDLNYWSDWSDSDQIKEALPEPFEHILQRIA. Methionine amide is present on residues M68 and M107.

The protein belongs to the tachykinin family. The substance P form is cleaved at Pro-59 by the prolyl endopeptidase FAP (seprase) activity (in vitro). Substance P is also cleaved and degraded by Angiotensin-converting enzyme (ACE) and neprilysin (MME).

It localises to the secreted. In terms of biological role, tachykinins are active peptides which excite neurons, evoke behavioral responses, are potent vasodilators and secretagogues, and contract (directly or indirectly) many smooth muscles. The protein is Protachykinin-1 (TAC1) of Mesocricetus auratus (Golden hamster).